A 757-amino-acid polypeptide reads, in one-letter code: Elongation factor G, mitochondrial (757 aa).

A mitochondrion-targeting transit peptide spans 1-41; it reads MLERAALLHRLRLPAHSLPFIYNGALFGGAKRSFSATSKRC. In terms of domain architecture, tr-type G spans 66–347; it reads KLLRNIGVSA…AIVDYLPEPS (282 aa). GTP is bound by residues 75 to 82, 146 to 150, and 200 to 203; these read AHIDSGKT, DTPGH, and NKMD.

This sequence belongs to the TRAFAC class translation factor GTPase superfamily. Classic translation factor GTPase family. EF-G/EF-2 subfamily.

The protein localises to the mitochondrion. It participates in protein biosynthesis; polypeptide chain elongation. Mitochondrial GTPase that catalyzes the GTP-dependent ribosomal translocation step during translation elongation. During this step, the ribosome changes from the pre-translocational (PRE) to the post-translocational (POST) state as the newly formed A-site-bound peptidyl-tRNA and P-site-bound deacylated tRNA move to the P and E sites, respectively. Catalyzes the coordinated movement of the two tRNA molecules, the mRNA and conformational changes in the ribosome. This Eremothecium gossypii (strain ATCC 10895 / CBS 109.51 / FGSC 9923 / NRRL Y-1056) (Yeast) protein is Elongation factor G, mitochondrial.